The primary structure comprises 485 residues: Auxin transporter protein 1 (485 aa).

Residues 1-59 lie on the Cytoplasmic side of the membrane; it reads MSEGVEAIVANDNGTDQVNGNRTGKDNEEHDGSTGSNLSNFLWHGGSVWDAWFSCASNQ. A compositionally biased stretch (polar residues) spans 12–22; it reads DNGTDQVNGNR. The segment at 12 to 33 is disordered; it reads DNGTDQVNGNRTGKDNEEHDGS. A compositionally biased stretch (basic and acidic residues) spans 23 to 32; it reads TGKDNEEHDG. The chain crosses the membrane as a helical span at residues 60–77; it reads VAQVLLTLPYSFSQLGML. The Extracellular segment spans residues 78 to 79; the sequence is SG. Residues 80–100 traverse the membrane as a helical segment; it reads IVLQIFYGLLGSWTAYLISVL. At 101-135 the chain is on the cytoplasmic side; the sequence is YVEYRARKEKEGKSFKNHVIQWFEVLDGLLGSYWK. The helical transmembrane segment at 136–156 threads the bilayer; the sequence is ALGLAFNCTFLLFGSVIQLIA. Residues 157-172 lie on the Extracellular side of the membrane; that stretch reads CASNIYYINDHLDKRT. Residues 173 to 193 form a helical membrane-spanning segment; sequence WTYIFGACCATTVFIPSFHNY. Residues 194–196 are Cytoplasmic-facing; the sequence is RIW. Residues 197 to 217 traverse the membrane as a helical segment; the sequence is SFLGLGMTTYTAWYLAIASII. At 218-232 the chain is on the extracellular side; that stretch reads HGQAEGVKHSGPTKL. Residues 233–253 form a helical membrane-spanning segment; that stretch reads VLYFTGATNILYTFGGHAVTV. The Cytoplasmic segment spans residues 254–266; that stretch reads EIMHAMWKPQKFK. The chain crosses the membrane as a helical span at residues 267–287; the sequence is YIYLMATLYVFTLTIPSAAAV. At 288-314 the chain is on the extracellular side; it reads YWAFGDALLDHSNAFSLMPKNAWRDAA. Residues 315-335 traverse the membrane as a helical segment; sequence VILMLIHQFITFGFACTPLYF. The Cytoplasmic portion of the chain corresponds to 336–356; that stretch reads VWEKVIGMHDTKSICLRALAR. Residues 357–377 traverse the membrane as a helical segment; sequence LPVVIPIWFLAIIFPFFGPIN. Position 378 (Ser378) is a topological domain, extracellular. The chain crosses the membrane as a helical span at residues 379–399; it reads AVGALLVSFTVYIIPSLAHML. At 400–425 the chain is on the cytoplasmic side; the sequence is TYRSASARQNAAEKPPFFMPSWTAMY. A helical transmembrane segment spans residues 426-446; the sequence is VLNAFVVVWVLIVGFGFGGWA. Residues 447-485 lie on the Extracellular side of the membrane; the sequence is SVTNFVRQVDTFGLFAKCYQCKPAAAAAHAPVSALHHRL.

This sequence belongs to the amino acid/polyamine transporter 2 family. Amino acid/auxin permease (AAAP) (TC 2.A.18.1) subfamily. Expressed in root and shoot apical tissues. In root apex, confined to stele initials, protophloem poles, statolith-containing S2 columella cells, lateral root cap cells (LRC), and in epidermal cells from the distal elongation zone (DEZ) up to central elongation zone (CEZ).

The protein localises to the cell membrane. With respect to regulation, auxin uptake mediated by AUX1 is inhibited by chromosaponin-1 (CSI), 1-naphthoxyacetic acid (1-NOA) and 3-chloro-4-hydroxyphenylacetic acid (CHPAA). In terms of biological role, carrier protein involved in proton-driven auxin influx. Mediates the formation of auxin gradient from developing leaves (site of auxin biosynthesis) to tips by contributing to the loading of auxin in vascular tissues and facilitating acropetal (base to tip) auxin transport within inner tissues of the root apex, and basipetal (tip to base) auxin transport within outer tissues of the root apex. Unloads auxin from the mature phloem to deliver the hormone to the root meristem via the protophloem cell files. Coordinated subcellular localization of AUX1 is regulated by a brefeldin A-sensitive (BFA) vesicle trafficking process. Involved in lateral root formation, trichoblast polarization and root hair elongation. Required for gravitropism and thigmotropism, especially in roots, by modulating responses to auxin, ethylene and cytokinins such as benzyladenine (BA). Needed for ammonium-mediated root-growth inhibition. Confers sensitivity to the herbicide 2,4-dichlorophenoxyacetic acid (2,4-D, auxin analog), and to polar auxin transport inhibitors such as N-1-naphthylphthalamic acid (NPA) and 2,3,5-triiodobenzoic acid (TIBA). This chain is Auxin transporter protein 1 (AUX1), found in Arabidopsis thaliana (Mouse-ear cress).